The chain runs to 372 residues: M protein, serotype 2.2 (372 aa).

A signal peptide spans 1–41 (MARQQTKKNYSLRKLKTGTASVAVALTVLGAGFANQTEVRA). 3 C repeats span residues 124-158 (AKTT…EAKH), 166-200 (KKLT…EAKY), and 215-249 (QKLE…TSEL). 3 stretches are compositionally biased toward basic and acidic residues: residues 125-169 (KTTK…KKLT), 226-246 (TSRK…KKVT), and 260-274 (EESK…AELQ). Disordered regions lie at residues 125-191 (KTTK…ASRA) and 211-274 (EAKH…AELQ). 4 D repeats span residues 275-280 (AKLDAQ), 281-286 (GKALKE), 289-294 (AKQTEE), and 296-301 (AKLRAE). The span at 295 to 304 (LAKLRAEKAA) shows a compositional bias: basic and acidic residues. Positions 295 to 344 (LAKLRAEKAAGSKTPATKPANKERSGRAAQTATRPSQNKGMRSQLPSTGE) are disordered. Positions 322–341 (AAQTATRPSQNKGMRSQLPS) are enriched in polar residues. The LPXTG sorting signal motif lies at 339 to 343 (LPSTG). At Thr342 the chain carries Pentaglycyl murein peptidoglycan amidated threonine. A propeptide spans 343–372 (GEAANPFFTAAAATVMVSAGMLALKRKEEN) (removed by sortase).

Belongs to the M protein family.

The protein resides in the secreted. It is found in the cell wall. Functionally, this protein is one of the different antigenic serotypes of protein M. Protein M is closely associated with virulence of the bacterium and can render the organism resistant to phagocytosis. The chain is M protein, serotype 2.2 (emmL2.2) from Streptococcus pyogenes.